Here is a 147-residue protein sequence, read N- to C-terminus: Phospholipase A2 inhibitor subunit B (147 aa).

A C-type lectin domain is found at 62-143; the sequence is EICEEAGGHI…DEKLLVVCEF (82 aa). 2 cysteine pairs are disulfide-bonded: Cys64/Cys141 and Cys119/Cys133. N-linked (GlcNAc...) asparagine glycosylation is present at Asn103.

The protein belongs to the alpha-type phospholipase A2 inhibitor family. As to quaternary structure, homo- or heterotrimer; homotrimer of PLI-A chains, two PLI-A and one PLI-B chains, one PLI-A and two PLI-B chains, and homotrimer of PLI-B chains (with a ratio of 1:3:3:1). As to expression, expressed by the liver.

The protein resides in the secreted. Its function is as follows. PLI binds directly phospholipase A2 in the presence or absence of calcium. Inhibitory activity of the PLI-B homotrimer is less specific than that of the PLI-A homotrimer. The chain is Phospholipase A2 inhibitor subunit B from Protobothrops flavoviridis (Habu).